The sequence spans 112 residues: uncharacterized protein (112 aa).

The segment at 91–112 is disordered; the sequence is ENQRKKGTRKRRSSEVDSKEKS. Basic and acidic residues predominate over residues 103-112; sequence SSEVDSKEKS.

This is an uncharacterized protein from Caenorhabditis elegans.